The following is a 436-amino-acid chain: Putative ankyrin repeat protein FPV026 (436 aa).

6 ANK repeats span residues 63-92 (EGIR…NVNE), 101-130 (TCYS…DVNN), 135-164 (LRNT…DQNI), 168-197 (NGNI…NLEI), 201-230 (NGRT…LVDS), and 234-266 (EGYT…FLNI). In terms of domain architecture, F-box spans 409-436 (TSTITNLPYEVIYIIVEKMTNKELCEIR).

This Fowlpox virus (strain NVSL) (FPV) protein is Putative ankyrin repeat protein FPV026.